The sequence spans 657 residues: MTQLAIGKPAPLGAHYDGQGVNFTLFSAHAERVELCVFDANGHEHRYDLPGHSGDIWHGYLPDARPGLRYGYRVHGPWQPAEGHRFNPAKLLIDPCARQIDGEFKDNPLLYAGHNEPDYRDNAAIAPKCVVVVDHYDWEDDAPPRTPWGSTIIYEAHVKGLTYLHPEIPVEIRGTYKALGHPVMINYLKQLGITALELLPVAQFASEPRLQRMGLSNYWGYNPVAMFALHPAYACSPETALHEFRDAIKALHKAGIEVILDIVLNHSAELDLDGPLFSLRGIDNRSYYWIREDGDYHNWTGCGNTLNLSHPAVVDYASACLRYWVETCHVDGFRFDLAAVMGRTPEFRQDAPLFTAIQNCPVLSQVKLIAEPWDIAPGGYQVGNFPPLFAEWNDHFRDAARRFWLHYDLPLGAFAGRFAASSDVFKRNGRLPSAAINLVTAHDGFTLRDCVCFNHKHNEANGEENRDGTNNNYSNNHGKEGLGGTLDLVERRRDSIHALLTTLLLSQGTPMLLAGDEHGHSQHGNNNAYCQDNQLTWLDWSQASSGLTAFTAALIHLRKRIPALVENRWWEEGDGNVRWLNRYAQPLSTDEWQNGPKQLQILLSDRFLIAINATLEVTEIVLPAGEWHAIPPFAGEDNPVITAVWQGPAHGLCVFQR.

Residue D336 is the Nucleophile of the active site. E371 functions as the Proton donor in the catalytic mechanism. Residues 460–479 form a disordered region; sequence ANGEENRDGTNNNYSNNHGK.

This sequence belongs to the glycosyl hydrolase 13 family.

The enzyme catalyses Hydrolysis of (1-&gt;6)-alpha-D-glucosidic linkages to branches with degrees of polymerization of three or four glucose residues in limit dextrin.. The protein operates within glycan degradation; glycogen degradation. Removes maltotriose and maltotetraose chains that are attached by 1,6-alpha-linkage to the limit dextrin main chain, generating a debranched limit dextrin. This Shigella dysenteriae serotype 1 (strain Sd197) protein is Glycogen debranching enzyme.